Reading from the N-terminus, the 478-residue chain is NADH-quinone oxidoreductase subunit N (478 aa).

Helical transmembrane passes span 8 to 28 (LVLP…FGVW), 38 to 58 (ILWA…LGTG), 62 to 82 (AFGG…VILV), 106 to 126 (PILI…GDLM), 160 to 180 (FVLG…VYGF), 200 to 220 (IGLL…VSAV), 234 to 254 (PTPV…ALIA), 268 to 288 (WGQI…IAGI), 300 to 320 (SSIS…AAGV), 322 to 342 (SMLL…AFIL), 368 to 388 (AFAL…LGFF), 398 to 418 (IGAG…IGAF), and 445 to 465 (FAFL…MAGV).

It belongs to the complex I subunit 2 family. NDH-1 is composed of 14 different subunits. Subunits NuoA, H, J, K, L, M, N constitute the membrane sector of the complex.

The protein resides in the cellular chromatophore membrane. It catalyses the reaction a quinone + NADH + 5 H(+)(in) = a quinol + NAD(+) + 4 H(+)(out). Functionally, NDH-1 shuttles electrons from NADH, via FMN and iron-sulfur (Fe-S) centers, to quinones in the respiratory chain. The immediate electron acceptor for the enzyme in this species is believed to be ubiquinone. Couples the redox reaction to proton translocation (for every two electrons transferred, four hydrogen ions are translocated across the cytoplasmic membrane), and thus conserves the redox energy in a proton gradient. The chain is NADH-quinone oxidoreductase subunit N from Rhodobacter capsulatus (Rhodopseudomonas capsulata).